Consider the following 27-residue polypeptide: Toxin Bcg III 21.00 (27 aa).

It localises to the secreted. The protein localises to the nematocyst. Possible voltage-gated potassium channel (Kv) blocker. This Bunodosoma cangicum (Sea anemone) protein is Toxin Bcg III 21.00.